The primary structure comprises 396 residues: NADH-quinone oxidoreductase subunit D 1 (396 aa).

This sequence belongs to the complex I 49 kDa subunit family. NDH-1 is composed of 14 different subunits. Subunits NuoB, C, D, E, F, and G constitute the peripheral sector of the complex.

The protein resides in the cell inner membrane. It carries out the reaction a quinone + NADH + 5 H(+)(in) = a quinol + NAD(+) + 4 H(+)(out). In terms of biological role, NDH-1 shuttles electrons from NADH, via FMN and iron-sulfur (Fe-S) centers, to quinones in the respiratory chain. The immediate electron acceptor for the enzyme in this species is believed to be ubiquinone. Couples the redox reaction to proton translocation (for every two electrons transferred, four hydrogen ions are translocated across the cytoplasmic membrane), and thus conserves the redox energy in a proton gradient. The sequence is that of NADH-quinone oxidoreductase subunit D 1 from Nitrobacter hamburgensis (strain DSM 10229 / NCIMB 13809 / X14).